A 202-amino-acid polypeptide reads, in one-letter code: ATP-dependent Clp protease proteolytic subunit (202 aa).

S101 (nucleophile) is an active-site residue. The active site involves H126.

This sequence belongs to the peptidase S14 family. In terms of assembly, component of the chloroplastic Clp protease core complex.

The protein localises to the plastid. It localises to the chloroplast stroma. It catalyses the reaction Hydrolysis of proteins to small peptides in the presence of ATP and magnesium. alpha-casein is the usual test substrate. In the absence of ATP, only oligopeptides shorter than five residues are hydrolyzed (such as succinyl-Leu-Tyr-|-NHMec, and Leu-Tyr-Leu-|-Tyr-Trp, in which cleavage of the -Tyr-|-Leu- and -Tyr-|-Trp bonds also occurs).. Its function is as follows. Cleaves peptides in various proteins in a process that requires ATP hydrolysis. Has a chymotrypsin-like activity. Plays a major role in the degradation of misfolded proteins. This chain is ATP-dependent Clp protease proteolytic subunit, found in Nuphar advena (Common spatterdock).